A 123-amino-acid chain; its full sequence is Ribosome-binding factor A (123 aa).

The protein belongs to the RbfA family. As to quaternary structure, monomer. Binds 30S ribosomal subunits, but not 50S ribosomal subunits or 70S ribosomes.

The protein resides in the cytoplasm. One of several proteins that assist in the late maturation steps of the functional core of the 30S ribosomal subunit. Associates with free 30S ribosomal subunits (but not with 30S subunits that are part of 70S ribosomes or polysomes). Required for efficient processing of 16S rRNA. May interact with the 5'-terminal helix region of 16S rRNA. This chain is Ribosome-binding factor A, found in Variovorax paradoxus (strain S110).